A 177-amino-acid polypeptide reads, in one-letter code: Probable chemoreceptor glutamine deamidase CheD (177 aa).

It belongs to the CheD family.

The catalysed reaction is L-glutaminyl-[protein] + H2O = L-glutamyl-[protein] + NH4(+). Its function is as follows. Probably deamidates glutamine residues to glutamate on methyl-accepting chemotaxis receptors (MCPs), playing an important role in chemotaxis. The polypeptide is Probable chemoreceptor glutamine deamidase CheD (Pseudomonas syringae pv. syringae (strain B728a)).